A 70-amino-acid polypeptide reads, in one-letter code: Large ribosomal subunit protein bL31 (70 aa).

Zn(2+) is bound by residues Cys-16, Cys-18, Cys-37, and Cys-40.

Belongs to the bacterial ribosomal protein bL31 family. Type A subfamily. Part of the 50S ribosomal subunit. Zn(2+) is required as a cofactor.

Functionally, binds the 23S rRNA. This Shewanella halifaxensis (strain HAW-EB4) protein is Large ribosomal subunit protein bL31.